The following is a 410-amino-acid chain: Peptide chain release factor subunit 1 (410 aa).

The protein belongs to the eukaryotic release factor 1 family. As to quaternary structure, heterodimer of two subunits, one of which binds GTP.

The protein localises to the cytoplasm. Functionally, directs the termination of nascent peptide synthesis (translation) in response to the termination codons UAA, UAG and UGA. The polypeptide is Peptide chain release factor subunit 1 (Picrophilus torridus (strain ATCC 700027 / DSM 9790 / JCM 10055 / NBRC 100828 / KAW 2/3)).